We begin with the raw amino-acid sequence, 321 residues long: Probable arabinan endo-1,5-alpha-L-arabinosidase C (321 aa).

A signal peptide spans 1–18; it reads MYLYTLILLFLASANVNA. Residue aspartate 33 is the Proton acceptor of the active site. An N-linked (GlcNAc...) asparagine glycan is attached at asparagine 192. The active-site Proton donor is glutamate 200. Asparagine 224 carries an N-linked (GlcNAc...) asparagine glycan.

The protein belongs to the glycosyl hydrolase 43 family.

The protein resides in the secreted. The enzyme catalyses Endohydrolysis of (1-&gt;5)-alpha-arabinofuranosidic linkages in (1-&gt;5)-arabinans.. It participates in glycan metabolism; L-arabinan degradation. Its function is as follows. Endo-1,5-alpha-L-arabinanase involved in degradation of pectin. Its preferred substrate is linear 1,5-alpha-L-arabinan. This Aspergillus fumigatus (strain ATCC MYA-4609 / CBS 101355 / FGSC A1100 / Af293) (Neosartorya fumigata) protein is Probable arabinan endo-1,5-alpha-L-arabinosidase C (abnC).